Reading from the N-terminus, the 426-residue chain is Cytochrome c biogenesis protein CcsB (426 aa).

3 consecutive transmembrane segments (helical) span residues 14–34 (LKIA…GTLI), 72–92 (SFWF…CSFR), and 162–182 (LGPI…TYGS).

Belongs to the Ccs1/CcsB family. May interact with CcsA.

The protein resides in the cellular thylakoid membrane. Functionally, required during biogenesis of c-type cytochromes (cytochrome c6 and cytochrome f) at the step of heme attachment. This is Cytochrome c biogenesis protein CcsB from Prochlorococcus marinus (strain NATL1A).